The primary structure comprises 430 residues: RPM1 interacting protein 13 (430 aa).

A disordered region spans residues 1 to 21; that stretch reads MGSGNHVDIVDVSSGEEDVDT. Residues 231–300 form a nuclear localization region; that stretch reads RHRIRQPIPH…QVSQSSHHSS (70 aa).

Interacts with RPM1 (via its NB-ARC domain). Binds to ARF1 in the nucleus.

Its subcellular location is the nucleus. Resistance protein interactor which positively enhances RPM1-mediated resistance to necrotrophic bacterial pathogens Pseudomonas syringae pv. tomato DC3000 harboring type III effector protein AvrRpm1 or AvrB, but prevents the hypersensitive response (HR) controlled by RPM1. Together with ARF1, promotes leaf senescence and cell death, probably by facilitating the translocation of ARF1 into the nucleus, and activates ROS-related enzymes (e.g. POD, CAT and SOD). The protein is RPM1 interacting protein 13 of Arabidopsis thaliana (Mouse-ear cress).